The chain runs to 114 residues: Ribonuclease P protein component (114 aa).

This sequence belongs to the RnpA family. In terms of assembly, consists of a catalytic RNA component (M1 or rnpB) and a protein subunit.

It catalyses the reaction Endonucleolytic cleavage of RNA, removing 5'-extranucleotides from tRNA precursor.. RNaseP catalyzes the removal of the 5'-leader sequence from pre-tRNA to produce the mature 5'-terminus. It can also cleave other RNA substrates such as 4.5S RNA. The protein component plays an auxiliary but essential role in vivo by binding to the 5'-leader sequence and broadening the substrate specificity of the ribozyme. The polypeptide is Ribonuclease P protein component (Clostridioides difficile (strain 630) (Peptoclostridium difficile)).